Here is a 451-residue protein sequence, read N- to C-terminus: 12S seed storage protein CRD (451 aa).

The first 25 residues, methionine 1–alanine 25, serve as a signal peptide directing secretion. 2 disulfides stabilise this stretch: cysteine 36-cysteine 69 and cysteine 112-cysteine 277. Serine 39 carries the phosphoserine modification. 2 Cupin type-1 domains span residues asparagine 42 to lysine 234 and glutamate 283 to lysine 432. Threonine 115 carries the phosphothreonine modification. Serine 302 bears the Phosphoserine mark. Threonine 396 is modified (phosphothreonine). At serine 437 the chain carries Phosphoserine.

This sequence belongs to the 11S seed storage protein (globulins) family. As to quaternary structure, hexamer; each subunit is composed of an acidic and a basic chain derived from a single precursor and linked by a disulfide bond. Post-translationally, ubiquitinated. Proteolytically processed during seed maturation at a conserved Asn-Gly peptide bond by an asparaginyl endopeptidase to produce two mature polypeptides referred to as alpha and beta subunits that are joined together by a disulfide bond. In terms of processing, phosphorylated in seeds on some Tyr residues in response to abscisic acid (ABA). As to expression, accumulates in seeds 8 days after anthesis.

It is found in the protein storage vacuole. Functionally, seed storage protein. The chain is 12S seed storage protein CRD (CRD) from Arabidopsis thaliana (Mouse-ear cress).